The sequence spans 991 residues: Gingipain R1 (991 aa).

The first 24 residues, methionine 1–glutamine 24, serve as a signal peptide directing secretion. Positions glutamine 25–arginine 227 are excised as a propeptide. Residues aspartate 305, valine 327, aspartate 330, tyrosine 332, glutamate 334, glutamate 388, and histidine 393 each contribute to the Ca(2+) site. Residue histidine 438 is the Proton donor of the active site. The active-site Nucleophile is cysteine 471. Ca(2+) contacts are provided by phenylalanine 476, glutamate 485, aspartate 519, glutamate 520, glutamate 523, and histidine 529.

The protein belongs to the peptidase C25 family.

The protein localises to the secreted. The catalysed reaction is Hydrolysis of proteins and small molecule substrates, with a preference for Arg in P1.. Requires cysteine for activation and Ca(2+) and/or Mg(2+) for stabilization. It is stimulated by glycine-containing dipeptides. It is resistant to inhibition by proteinase inhibitors in human plasma. Thiol protease. Acts synergistically with RgpB to catalyze the maturation of fimbrial subunits, such as FimA. Its proteolytic activity is a major factor in both periodontal tissue destruction and in evasion of host defense mechanisms. The protein is Gingipain R1 (rgpA) of Porphyromonas gingivalis (Bacteroides gingivalis).